Reading from the N-terminus, the 871-residue chain is Transient receptor potential cation channel subfamily V member 4 (871 aa).

The tract at residues 1-68 is disordered; it reads MADSSEGPRA…GPGDGRPNLR (68 aa). The Cytoplasmic portion of the chain corresponds to 1 to 469; the sequence is MADSSEGPRA…RDKWRKFGAV (469 aa). Tyr110 bears the Phosphotyrosine mark. ATP-binding positions include Lys192, Lys197, Asn201, 236-239, and Arg248; that span reads YRGQ. 2 ANK repeats span residues 237-266 and 284-313; these read RGQT…DVHA and FGEL…KKAD. 249 to 251 contacts a 1,2-diacyl-sn-glycero-3-phospho-(1D-myo-inositol-4,5-bisphosphate); sequence RCK. At Tyr253 the chain carries Phosphotyrosine. A 1,2-diacyl-sn-glycero-3-phospho-(1D-myo-inositol-4,5-bisphosphate) contacts are provided by residues 296–299 and Lys344; that span reads NQPH. The stretch at 369–398 is one ANK 3 repeat; sequence DGLSPLMMAAKTGKIGIFQHIIRREVTDED. A helical transmembrane segment spans residues 470–490; it reads SFYINVVSYLCAMVIFTLTAY. Topologically, residues 491–507 are extracellular; that stretch reads YQPLEGTPPYPYRTTVD. Residues 508–534 form a helical membrane-spanning segment; it reads YLRLAGEVITLFTGVLFFFTNIKDLFM. Residues 535 to 547 lie on the Cytoplasmic side of the membrane; it reads KKCPGVNSLFIDG. Residues 548–568 form a helical membrane-spanning segment; that stretch reads SFQLLYFIYSVLVIVSAALYL. Residues 569–572 are Extracellular-facing; that stretch reads AGIE. The helical transmembrane segment at 573 to 593 threads the bilayer; that stretch reads AYLAVMVFALVLGWMNALYFT. The Cytoplasmic segment spans residues 594-608; that stretch reads RGLKLTGTYSIMIQK. The helical transmembrane segment at 609 to 636 threads the bilayer; sequence ILFKDLFRFLLVYLLFMIGYASALVSLL. Residues 637–665 are Extracellular-facing; sequence NPCANMKVCNEDQTNCTVPTYPSCRDSET. Positions 666-685 form an intramembrane region, pore-forming; the sequence is FSTFLLDLFKLTIGMGDLEM. Positions 679–682 match the Selectivity filter motif; that stretch reads GMGD. Asp682 is a binding site for Ca(2+). Over 686-693 the chain is Extracellular; it reads LSSTKYPV. The helical transmembrane segment at 694–722 threads the bilayer; it reads VFIILLVTYIILTFVLLLNMLIALMGETV. Residues 723-871 lie on the Cytoplasmic side of the membrane; sequence GQVSKESKHI…RKWRTDDAPL (149 aa). Residue Tyr805 is modified to Phosphotyrosine. The segment at 812-831 is interaction with calmodulin and ITPR3; that stretch reads HTVGRLRRDRWSSVVPRVVE. Ser824 bears the Phosphoserine mark. The interval 849-871 is disordered; the sequence is GNPRCDGHQQGYPRKWRTDDAPL.

The protein belongs to the transient receptor (TC 1.A.4) family. TrpV subfamily. TRPV4 sub-subfamily. In terms of assembly, homotetramer. Self-associates in an isoform-specific manner. Isoform 1 and isoform 5 can oligomerize, but isoform 2, isoform 4 and isoform 6 cannot oligomerize. Interacts with calmodulin. Interacts with Map7 and Src family Tyr protein kinases LYN, SRC, FYN, HCK, LCK and YES. Interacts with CTNNB1. The TRPV4 and CTNNB1 complex can interact with CDH1. Interacts with PACSIN1, PACSIN2 and PACSIN3 (via SH3 domain). Part of a complex containing MLC1, AQP4, HEPACAM and ATP1B1. Interacts with ITPR3. Interacts with AQP5; the interaction is probably indirect and regulates TRPV4 activation by hypotonicity. Interacts with ANO1. Interacts (via C-terminus) with PKD2 (via C-terminus). Interacts with DDX3X; this interaction is decreased when the channel is activated. N-glycosylated. As to expression, found in the synoviocytes from patients with (RA) and without (CTR) rheumatoid arthritis (at protein level).

Its subcellular location is the cell membrane. The protein localises to the apical cell membrane. It localises to the cell junction. The protein resides in the adherens junction. It is found in the cell projection. Its subcellular location is the cilium. The protein localises to the endoplasmic reticulum. It catalyses the reaction Ca(2+)(in) = Ca(2+)(out). With respect to regulation, channel activation is inhibited by binding to phosphatidylinositol-4,5-bisphosphate, and to a much lesser degree by phosphatidylinositol-3,4,5-trisphosphate. Not inhibited by phosphatidylinositol-3,4-bisphosphate and phosphatidylinositol-3,5-bisphosphate. Functionally, non-selective calcium permeant cation channel involved in osmotic sensitivity and mechanosensitivity. Activation by exposure to hypotonicity within the physiological range exhibits an outward rectification. Also activated by heat, low pH, citrate and phorbol esters. Increase of intracellular Ca(2+) potentiates currents. Channel activity seems to be regulated by a calmodulin-dependent mechanism with a negative feedback mechanism. Promotes cell-cell junction formation in skin keratinocytes and plays an important role in the formation and/or maintenance of functional intercellular barriers. Acts as a regulator of intracellular Ca(2+) in synoviocytes. Plays an obligatory role as a molecular component in the nonselective cation channel activation induced by 4-alpha-phorbol 12,13-didecanoate and hypotonic stimulation in synoviocytes and also regulates production of IL-8. Together with PKD2, forms mechano- and thermosensitive channels in cilium. Negatively regulates expression of PPARGC1A, UCP1, oxidative metabolism and respiration in adipocytes. Regulates expression of chemokines and cytokines related to pro-inflammatory pathway in adipocytes. Together with AQP5, controls regulatory volume decrease in salivary epithelial cells. Required for normal development and maintenance of bone and cartilage. In its inactive state, may sequester DDX3X at the plasma membrane. When activated, the interaction between both proteins is affected and DDX3X relocalizes to the nucleus. In neurons of the central nervous system, could play a role in triggering voluntary water intake in response to increased sodium concentration in body fluid. Its function is as follows. Non-selective calcium permeant cation channel involved in osmotic sensitivity and mechanosensitivity. Activation by exposure to hypotonicity within the physiological range exhibits an outward rectification. Also activated by phorbol esters. Has the same channel activity as isoform 1, and is activated by the same stimuli. Lacks channel activity, due to impaired oligomerization and intracellular retention. In terms of biological role, (Microbial infection) Facilitates hepatitis C virus (HCV) replication, possibly through its action on DDX3X. Functionally, (Microbial infection) Facilitates Dengue virus (DENV) replication, possibly through its action on DDX3X. Its function is as follows. (Microbial infection) Facilitates Zika virus (ZIKV) replication, possibly through its action on DDX3X. The polypeptide is Transient receptor potential cation channel subfamily V member 4 (TRPV4) (Homo sapiens (Human)).